A 692-amino-acid polypeptide reads, in one-letter code: Methionine--tRNA ligase (692 aa).

A 'HIGH' region motif is present at residues 12 to 22; the sequence is PYANGSFHIGH. Positions 143, 146, 156, and 159 each coordinate Zn(2+). The 'KMSKS' region motif lies at 341-345; the sequence is KMSKS. Residue Lys-344 participates in ATP binding. The tRNA-binding domain maps to 586 to 692; sequence DFAKIDLRIA…PGAQPGMRVR (107 aa).

It belongs to the class-I aminoacyl-tRNA synthetase family. MetG type 1 subfamily. As to quaternary structure, homodimer. Zn(2+) is required as a cofactor.

It localises to the cytoplasm. The catalysed reaction is tRNA(Met) + L-methionine + ATP = L-methionyl-tRNA(Met) + AMP + diphosphate. In terms of biological role, is required not only for elongation of protein synthesis but also for the initiation of all mRNA translation through initiator tRNA(fMet) aminoacylation. The sequence is that of Methionine--tRNA ligase from Bordetella bronchiseptica (strain ATCC BAA-588 / NCTC 13252 / RB50) (Alcaligenes bronchisepticus).